Here is a 403-residue protein sequence, read N- to C-terminus: Rhomboid-like protein 15 (403 aa).

The next 5 helical transmembrane spans lie at 22-42, 70-90, 103-123, 141-161, and 176-196; these read IPFL…ICLL, AIIF…LVPM, LLYL…LIAS, AIGF…LSGV, and LYPW…SLLG. Catalysis depends on Ser-145, which acts as the Nucleophile. His-197 functions as the Charge relay system in the catalytic mechanism. Residues 198–218 traverse the membrane as a helical segment; that stretch reads LCGILSGFSYSYGLFNFLMPG. The tract at residues 282 to 316 is disordered; sequence EASNQSSEDSRFPGRGRTLSTARDPTAPAGETDPN. The 41-residue stretch at 361-401 folds into the UBA domain; it reads AASEEQIQKLVAMGFDRTQVEVALAAADDDLTVAVEILMSQ.

The protein belongs to the peptidase S54 family.

It localises to the membrane. Probable rhomboid-type serine protease that catalyzes intramembrane proteolysis. May function in senescence. In Arabidopsis thaliana (Mouse-ear cress), this protein is Rhomboid-like protein 15.